Here is a 207-residue protein sequence, read N- to C-terminus: MKTKILSLANEEVGEISLNEDIFAVEFIRDDIIKQVIDWQRAKAMSGNHKTKTVSEVLGTTKKPFKQKGTGNARQGSLRSVQMRGGGVAHGPRVRSHATKLPKKVRKLGLIHALSEKCAEGKLLVIDSLKLDKPKTSVLVNILNKFQGKSFFVIDGNEVDINFSLAAKNIYNTVIVPQIGANVYDIIRHEYVLLSQEAVSVLEERLR.

Belongs to the universal ribosomal protein uL4 family. In terms of assembly, part of the 50S ribosomal subunit.

Its function is as follows. One of the primary rRNA binding proteins, this protein initially binds near the 5'-end of the 23S rRNA. It is important during the early stages of 50S assembly. It makes multiple contacts with different domains of the 23S rRNA in the assembled 50S subunit and ribosome. Functionally, forms part of the polypeptide exit tunnel. The sequence is that of Large ribosomal subunit protein uL4 from Rickettsia peacockii (strain Rustic).